A 378-amino-acid chain; its full sequence is Enoyl-[acyl-carrier-protein] reductase 1, mitochondrial (378 aa).

Y59 acts as the Proton donor in catalysis. NADP(+) contacts are provided by residues N151, N180 to V183, R203 to K206, Y284 to M287, Y309 to L311, and K372.

The protein belongs to the zinc-containing alcohol dehydrogenase family. Quinone oxidoreductase subfamily. In terms of assembly, homodimer.

Its subcellular location is the mitochondrion matrix. The enzyme catalyses a 2,3-saturated acyl-[ACP] + NADP(+) = a (2E)-enoyl-[ACP] + NADPH + H(+). Functionally, catalyzes the NADPH-dependent reduction of trans-2-enoyl thioesters in mitochondrial fatty acid synthesis (fatty acid synthesis type II). Fatty acid chain elongation in mitochondria uses acyl carrier protein (ACP) as an acyl group carrier, but the enzyme accepts both ACP and CoA thioesters as substrates in vitro. Required for respiration and the maintenance of the mitochondrial compartment. The polypeptide is Enoyl-[acyl-carrier-protein] reductase 1, mitochondrial (ETR1) (Debaryomyces hansenii (strain ATCC 36239 / CBS 767 / BCRC 21394 / JCM 1990 / NBRC 0083 / IGC 2968) (Yeast)).